The following is a 98-amino-acid chain: Putative septation protein SpoVG (98 aa).

The protein belongs to the SpoVG family.

In terms of biological role, could be involved in septation. The protein is Putative septation protein SpoVG of Alkaliphilus metalliredigens (strain QYMF).